The sequence spans 104 residues: Large ribosomal subunit protein uL23 (104 aa).

It belongs to the universal ribosomal protein uL23 family. As to quaternary structure, part of the 50S ribosomal subunit. Contacts protein L29, and trigger factor when it is bound to the ribosome.

One of the early assembly proteins it binds 23S rRNA. One of the proteins that surrounds the polypeptide exit tunnel on the outside of the ribosome. Forms the main docking site for trigger factor binding to the ribosome. The polypeptide is Large ribosomal subunit protein uL23 (Nostoc punctiforme (strain ATCC 29133 / PCC 73102)).